Here is a 508-residue protein sequence, read N- to C-terminus: Photosystem II CP47 reaction center protein (508 aa).

The next 6 helical transmembrane spans lie at 21-36 (SVHI…WAGS), 101-115 (IVFS…IWHW), 140-156 (GIHL…FGAF), 203-218 (IAAG…FHLS), 237-252 (VLSS…AFVV), and 457-472 (SFAL…HGSR).

The protein belongs to the PsbB/PsbC family. PsbB subfamily. In terms of assembly, PSII is composed of 1 copy each of membrane proteins PsbA, PsbB, PsbC, PsbD, PsbE, PsbF, PsbH, PsbI, PsbJ, PsbK, PsbL, PsbM, PsbT, PsbX, PsbY, PsbZ, Psb30/Ycf12, at least 3 peripheral proteins of the oxygen-evolving complex and a large number of cofactors. It forms dimeric complexes. The cofactor is Binds multiple chlorophylls. PSII binds additional chlorophylls, carotenoids and specific lipids..

It is found in the plastid. The protein localises to the chloroplast thylakoid membrane. In terms of biological role, one of the components of the core complex of photosystem II (PSII). It binds chlorophyll and helps catalyze the primary light-induced photochemical processes of PSII. PSII is a light-driven water:plastoquinone oxidoreductase, using light energy to abstract electrons from H(2)O, generating O(2) and a proton gradient subsequently used for ATP formation. This chain is Photosystem II CP47 reaction center protein, found in Draba nemorosa (Woodland whitlowgrass).